We begin with the raw amino-acid sequence, 1040 residues long: Multidrug resistance protein MdtB (1040 aa).

12 consecutive transmembrane segments (helical) span residues 16-36 (FIMR…AGII), 347-367 (LMMA…NIPA), 369-389 (IIPG…MVFL), 396-416 (LTLM…IVVI), 440-460 (IGFT…PLLF), 472-492 (FAIT…TLTP), 537-557 (WLTL…WVFI), 863-883 (LGST…VLGI), 888-908 (FIHP…ALLA), 911-931 (IAGS…IGIV), 968-988 (ILMT…STGV), and 998-1018 (IGMV…TPVI).

It belongs to the resistance-nodulation-cell division (RND) (TC 2.A.6) family. MdtB subfamily. As to quaternary structure, part of a tripartite efflux system composed of MdtA, MdtB and MdtC. MdtB forms a heteromultimer with MdtC.

The protein resides in the cell inner membrane. This chain is Multidrug resistance protein MdtB, found in Shigella boydii serotype 18 (strain CDC 3083-94 / BS512).